A 404-amino-acid chain; its full sequence is Multidrug resistance protein MdtG (404 aa).

11 helical membrane-spanning segments follow: residues 19–39, 56–76, 90–110, 113–133, 144–164, 171–191, 222–242, 254–274, 288–308, 317–337, and 376–396; these read LGCF…PLYV, LVFS…GGLA, LGMA…QFLI, ALLG…ATQA, TLST…GLLA, PVFF…FFFI, LFVT…ILTL, IAFI…LSAP, ILIV…FVQT, FLLG…LVYN, and AVFC…WNSL.

The protein belongs to the major facilitator superfamily. DHA1 family. MdtG (TC 2.A.1.2.20) subfamily.

Its subcellular location is the cell inner membrane. This chain is Multidrug resistance protein MdtG, found in Salmonella paratyphi A (strain ATCC 9150 / SARB42).